A 619-amino-acid polypeptide reads, in one-letter code: Translation initiation factor IF-2 (619 aa).

Positions 120-289 constitute a tr-type G domain; that stretch reads PRPPIVTIMG…ILLLGEVEGY (170 aa). The interval 129-136 is G1; that stretch reads GHVDHGKT. A GTP-binding site is contributed by 129–136; sequence GHVDHGKT. Residues 154 to 158 are G2; sequence GITQK. The segment at 176-179 is G3; that stretch reads DTPG. GTP contacts are provided by residues 176–180 and 230–233; these read DTPGH and NKMD. Residues 230–233 are G4; that stretch reads NKMD. Residues 266 to 268 are G5; that stretch reads SAL.

Belongs to the TRAFAC class translation factor GTPase superfamily. Classic translation factor GTPase family. IF-2 subfamily.

It localises to the cytoplasm. In terms of biological role, one of the essential components for the initiation of protein synthesis. Protects formylmethionyl-tRNA from spontaneous hydrolysis and promotes its binding to the 30S ribosomal subunits. Also involved in the hydrolysis of GTP during the formation of the 70S ribosomal complex. The protein is Translation initiation factor IF-2 (infB) of Mycoplasma genitalium (strain ATCC 33530 / DSM 19775 / NCTC 10195 / G37) (Mycoplasmoides genitalium).